The chain runs to 533 residues: (E)-beta-farnesene synthase (533 aa).

Residues D286, D290, N430, S434, and E438 each coordinate Mg(2+). The DDXXD motif motif lies at 286 to 290 (DDMMD).

It belongs to the terpene synthase family. Mg(2+) is required as a cofactor. Requires Co(2+) as cofactor. It depends on Mn(2+) as a cofactor.

It is found in the cytoplasm. It carries out the reaction (2E,6E)-farnesyl diphosphate = (E)-beta-farnesene + diphosphate. It participates in secondary metabolite biosynthesis; terpenoid biosynthesis. Its function is as follows. Sesquiterpene cyclase catalyzing the production of beta-farnesene and alpha-bergamotene in equal amounts from farnesyl diphosphate. Involved in indirect defense by producing volatile signals attracting natural enemies of herbivores. In Zea mays subsp. huehuetenangensis (San Antonio Huista teosinte), this protein is (E)-beta-farnesene synthase.